Reading from the N-terminus, the 212-residue chain is uncharacterized protein (212 aa).

Catalysis depends on Cys52, which acts as the Acyl-thioester intermediate. Active-site residues include His89 and Asp104.

Belongs to the arylamine N-acetyltransferase family.

This is an uncharacterized protein from Acanthamoeba polyphaga (Amoeba).